The primary structure comprises 367 residues: Glutamate 5-kinase (367 aa).

Residue lysine 10 participates in ATP binding. The substrate site is built by serine 50, aspartate 137, and asparagine 149. Residues 169–170 (TD) and 211–217 (TGGMGTK) each bind ATP. One can recognise a PUA domain in the interval 275–353 (AGEITVDEGA…QQIDAILGYE (79 aa)).

The protein belongs to the glutamate 5-kinase family.

The protein resides in the cytoplasm. It carries out the reaction L-glutamate + ATP = L-glutamyl 5-phosphate + ADP. It functions in the pathway amino-acid biosynthesis; L-proline biosynthesis; L-glutamate 5-semialdehyde from L-glutamate: step 1/2. In terms of biological role, catalyzes the transfer of a phosphate group to glutamate to form L-glutamate 5-phosphate. This is Glutamate 5-kinase from Cronobacter sakazakii (strain ATCC BAA-894) (Enterobacter sakazakii).